Here is a 35-residue protein sequence, read N- to C-terminus: Turgencin-B (35 aa).

M5 and M9 each carry methionine sulfoxide. 3 cysteine pairs are disulfide-bonded: C7–C31, C11–C27, and C16–C24. G35 is modified (glycine amide).

In terms of processing, oxidation likely reduces antimicrobial activity against Gram-positive bacteria and Gram-negative bacteria.

It localises to the secreted. In terms of biological role, has antimicrobial activity against Gram-positive bacteria (C.glutamicum ATCC 13032 (MIC=1.6 uM) and B.subtilis ATCC 23857 (MIC=1.6 uM)) and Gram-negative bacteria (E.coli ATCC 25922 (MIC=12.5 uM) and P.aeruginosa ATCC 27853 (MIC=25.0 uM)). Displays very low activity against the Gram-positive bacteria S.aureus ATCC 9144 (MIC&gt;100 uM). In Synoicum turgens (Colonial ascidian), this protein is Turgencin-B.